The chain runs to 72 residues: Translation initiation factor IF-1 (72 aa).

One can recognise an S1-like domain in the interval 1-72; the sequence is MSKQDVIEFD…TKGRITYRGK (72 aa).

Belongs to the IF-1 family. In terms of assembly, component of the 30S ribosomal translation pre-initiation complex which assembles on the 30S ribosome in the order IF-2 and IF-3, IF-1 and N-formylmethionyl-tRNA(fMet); mRNA recruitment can occur at any time during PIC assembly.

The protein resides in the cytoplasm. Its function is as follows. One of the essential components for the initiation of protein synthesis. Stabilizes the binding of IF-2 and IF-3 on the 30S subunit to which N-formylmethionyl-tRNA(fMet) subsequently binds. Helps modulate mRNA selection, yielding the 30S pre-initiation complex (PIC). Upon addition of the 50S ribosomal subunit IF-1, IF-2 and IF-3 are released leaving the mature 70S translation initiation complex. The sequence is that of Translation initiation factor IF-1 from Hydrogenovibrio crunogenus (strain DSM 25203 / XCL-2) (Thiomicrospira crunogena).